Reading from the N-terminus, the 89-residue chain is MKFVSVFLVLFIFFLVVLEAPEKIEAKDDKFICVVEYGGDVGPTFCNPKFFPTLCRQNCRSFKGAKGGKCVKQPKHKHIKCFCDYCKDD.

Positions 1-26 (MKFVSVFLVLFIFFLVVLEAPEKIEA) are cleaved as a signal peptide. Cystine bridges form between cysteine 33–cysteine 86, cysteine 46–cysteine 70, cysteine 55–cysteine 81, and cysteine 59–cysteine 83.

The protein belongs to the DEFL family. Protease inhibitor I18 (RTI/MTI-2) subfamily.

The protein localises to the secreted. In Arabidopsis thaliana (Mouse-ear cress), this protein is Defensin-like protein 197 (ATTI6).